The sequence spans 622 residues: DNA mismatch repair protein MutL (622 aa).

Basic and acidic residues predominate over residues 399-414; the sequence is SSQNFHPDENDYRAEE. A disordered region spans residues 399–422; it reads SSQNFHPDENDYRAEEASPAEENP.

It belongs to the DNA mismatch repair MutL/HexB family.

Functionally, this protein is involved in the repair of mismatches in DNA. It is required for dam-dependent methyl-directed DNA mismatch repair. May act as a 'molecular matchmaker', a protein that promotes the formation of a stable complex between two or more DNA-binding proteins in an ATP-dependent manner without itself being part of a final effector complex. This Phocaeicola vulgatus (strain ATCC 8482 / DSM 1447 / JCM 5826 / CCUG 4940 / NBRC 14291 / NCTC 11154) (Bacteroides vulgatus) protein is DNA mismatch repair protein MutL.